Reading from the N-terminus, the 388-residue chain is Succinate--CoA ligase [ADP-forming] subunit beta (388 aa).

Positions 9–244 (KQLFARYGLP…QSQEDPREAQ (236 aa)) constitute an ATP-grasp domain. ATP is bound by residues K46, 53 to 55 (GRG), E99, T102, and E107. Residues N199 and D213 each contribute to the Mg(2+) site. Substrate-binding positions include N264 and 321-323 (GIV).

It belongs to the succinate/malate CoA ligase beta subunit family. In terms of assembly, heterotetramer of two alpha and two beta subunits. Requires Mg(2+) as cofactor.

It catalyses the reaction succinate + ATP + CoA = succinyl-CoA + ADP + phosphate. The catalysed reaction is GTP + succinate + CoA = succinyl-CoA + GDP + phosphate. The protein operates within carbohydrate metabolism; tricarboxylic acid cycle; succinate from succinyl-CoA (ligase route): step 1/1. In terms of biological role, succinyl-CoA synthetase functions in the citric acid cycle (TCA), coupling the hydrolysis of succinyl-CoA to the synthesis of either ATP or GTP and thus represents the only step of substrate-level phosphorylation in the TCA. The beta subunit provides nucleotide specificity of the enzyme and binds the substrate succinate, while the binding sites for coenzyme A and phosphate are found in the alpha subunit. The polypeptide is Succinate--CoA ligase [ADP-forming] subunit beta (Enterobacter sp. (strain 638)).